A 493-amino-acid chain; its full sequence is Argininosuccinate lyase (493 aa).

Belongs to the lyase 1 family. Argininosuccinate lyase subfamily.

Its subcellular location is the cytoplasm. The catalysed reaction is 2-(N(omega)-L-arginino)succinate = fumarate + L-arginine. Its pathway is amino-acid biosynthesis; L-arginine biosynthesis; L-arginine from L-ornithine and carbamoyl phosphate: step 3/3. The sequence is that of Argininosuccinate lyase from Clavibacter sepedonicus (Clavibacter michiganensis subsp. sepedonicus).